Reading from the N-terminus, the 63-residue chain is Large ribosomal subunit protein bL32 (63 aa).

Positions 1 to 23 (MATPKAKVSKSRRDKRRAQFTAR) are disordered. Residues 7–18 (KVSKSRRDKRRA) show a composition bias toward basic residues.

Belongs to the bacterial ribosomal protein bL32 family.

In Prosthecochloris aestuarii (strain DSM 271 / SK 413), this protein is Large ribosomal subunit protein bL32.